Here is a 1148-residue protein sequence, read N- to C-terminus: Small G protein signaling modulator 1 (1148 aa).

The RUN domain occupies His-36–His-190. Residues Leu-256–Met-297 are important for interaction with RAB9A and RAB9B. The interval Val-301–Pro-350 is required for interaction with RAP family members. Disordered stretches follow at residues Asp-377–Asp-411, Asp-700–Glu-830, and Gly-871–Glu-894. Positions Gly-385–Ser-397 are enriched in basic residues. In terms of domain architecture, Rab-GAP TBC spans Gly-617–Lys-1081. Polar residues predominate over residues Thr-702–Gln-716. Positions Ala-742 to Pro-751 are enriched in basic and acidic residues. Positions Asn-757–Thr-802 are enriched in polar residues. 2 stretches are compositionally biased toward basic and acidic residues: residues Arg-805 to Ser-816 and Gly-871 to Ala-883. Positions Asp-884–Glu-894 are enriched in acidic residues.

This sequence belongs to the RUTBC family. Interacts with RAB9A (GTP-bound form) and RAB9B (GTP-bound form); has much lower affinity for GDP-bound RAB9A and RAB9B. Interacts with RAB3A, RAB4A, RAB5A, RAB8A, RAB11A, RAP1A, RAP1B, RAP2A and RAP2B. No interaction with RAB27A. In terms of tissue distribution, mainly expressed in brain, heart and testis.

Its subcellular location is the golgi apparatus. It is found in the trans-Golgi network. It localises to the cytoplasmic vesicle membrane. The protein resides in the cytoplasm. In terms of biological role, interacts with numerous Rab family members, functioning as Rab effector for some, and as GTPase activator for others. Promotes GTP hydrolysis by RAB34 and RAB36. Probably functions as a GTPase effector with RAB9A and RAB9B; does not stimulate GTP hydrolysis with RAB9A and RAB9B. This chain is Small G protein signaling modulator 1 (SGSM1), found in Homo sapiens (Human).